A 215-amino-acid polypeptide reads, in one-letter code: Glutathione S-transferase D6 (215 aa).

Positions 1–80 (MDLYNMSGSP…YLVEQYGKDD (80 aa)) constitute a GST N-terminal domain. Glutathione is bound by residues Ser-9, 50 to 52 (HTI), and 64 to 66 (ETR). A GST C-terminal domain is found at 86–206 (DPQKQALINQ…LARIQSAKKF (121 aa)).

The protein belongs to the GST superfamily. Delta family. In terms of assembly, homodimer.

The catalysed reaction is RX + glutathione = an S-substituted glutathione + a halide anion + H(+). Conjugation of reduced glutathione to a wide number of exogenous and endogenous hydrophobic electrophiles. May be involved in detoxification. The protein is Glutathione S-transferase D6 of Drosophila melanogaster (Fruit fly).